A 123-amino-acid chain; its full sequence is Small ribosomal subunit protein uS12 (123 aa).

Positions 1 to 28 (MPTIQQLIRKPRQPKVKRSKSQHLESCP) are disordered. Positions 9 to 21 (RKPRQPKVKRSKS) are enriched in basic residues. A 3-methylthioaspartic acid modification is found at Asp89.

Belongs to the universal ribosomal protein uS12 family. As to quaternary structure, part of the 30S ribosomal subunit. Contacts proteins S8 and S17. May interact with IF1 in the 30S initiation complex.

With S4 and S5 plays an important role in translational accuracy. Its function is as follows. Interacts with and stabilizes bases of the 16S rRNA that are involved in tRNA selection in the A site and with the mRNA backbone. Located at the interface of the 30S and 50S subunits, it traverses the body of the 30S subunit contacting proteins on the other side and probably holding the rRNA structure together. The combined cluster of proteins S8, S12 and S17 appears to hold together the shoulder and platform of the 30S subunit. This is Small ribosomal subunit protein uS12 from Dinoroseobacter shibae (strain DSM 16493 / NCIMB 14021 / DFL 12).